Reading from the N-terminus, the 248-residue chain is PF03932 family protein CutC (248 aa).

This sequence belongs to the CutC family. In terms of assembly, homodimer.

It is found in the cytoplasm. The chain is PF03932 family protein CutC from Escherichia coli O139:H28 (strain E24377A / ETEC).